The chain runs to 910 residues: DNA mismatch repair protein MutS (910 aa).

ATP is bound at residue 615–622; it reads GPNMAGKS.

It belongs to the DNA mismatch repair MutS family.

Its function is as follows. This protein is involved in the repair of mismatches in DNA. It is possible that it carries out the mismatch recognition step. This protein has a weak ATPase activity. The chain is DNA mismatch repair protein MutS from Clostridium perfringens (strain ATCC 13124 / DSM 756 / JCM 1290 / NCIMB 6125 / NCTC 8237 / Type A).